Consider the following 938-residue polypeptide: Scm-like with four MBT domains protein 2 (938 aa).

The disordered stretch occupies residues methionine 1–serine 32. The segment covering serine 13–leucine 30 has biased composition (polar residues). MBT repeat units lie at residues phenylalanine 43–proline 143, serine 151–proline 255, phenylalanine 265–proline 371, and phenylalanine 379–proline 475. The segment at proline 742–asparagine 836 is disordered. 2 stretches are compositionally biased toward basic and acidic residues: residues threonine 765 to arginine 777 and arginine 809 to alanine 822. The 64-residue stretch at tryptophan 868 to alanine 931 folds into the SAM domain.

In terms of assembly, interacts with YY1. Interacts with methylated histones H3K9me2 and H4K20me2. As to expression, expressed in testis and, at much lower levels, in ovary.

The protein resides in the nucleus. Transcriptional repressor of HOXB13 gene. The chain is Scm-like with four MBT domains protein 2 (Sfmbt2) from Mus musculus (Mouse).